Reading from the N-terminus, the 389-residue chain is uncharacterized protein (389 aa).

The segment covering 1-12 has biased composition (polar residues); the sequence is MVHATSQSASTE. 2 disordered regions span residues 1 to 49 and 86 to 111; these read MVHA…DEDL and HKSM…ANRA. Positions 40–49 are enriched in acidic residues; the sequence is ESGDEYDEDL. The segment covering 93 to 110 has biased composition (basic residues); the sequence is RGKKKRGKTAKKAKKANR.

This is an uncharacterized protein from Caenorhabditis elegans.